The sequence spans 1310 residues: Adhesion G protein-coupled receptor A3 (1310 aa).

The N-terminal stretch at 1–27 is a signal peptide; that stretch reads MEPPPPLLLLPLALLALLWGGERGAAA. Positions 28–70 constitute an LRRNT domain; that stretch reads LPAGCKHDGRARGTGRAAAAAEGKVVCSSLELAQVLPPDTLPN. The Extracellular portion of the chain corresponds to 28–747; sequence LPAGCKHDGR…TELYTPAASL (720 aa). N-linked (GlcNAc...) asparagine glycans are attached at residues Asn-70 and Asn-87. LRR repeat units lie at residues 71 to 92, 95 to 116, 119 to 140, and 143 to 164; these read RTVT…SFSG, LLER…AFWG, SLKR…VFRG, and NLVR…TFDY. Residues Asn-148, Asn-195, Asn-290, Asn-321, Asn-422, Asn-442, Asn-581, Asn-641, Asn-676, and Asn-717 are each glycosylated (N-linked (GlcNAc...) asparagine). Positions 176 to 226 constitute an LRRCT domain; sequence EYLLCDCNILWMHRWVKERNITVRDTRCVYPKSLQAQPVTGVKQELLTCDP. The 99-residue stretch at 231–329 folds into the Ig-like domain; sequence PSFYMTPSHR…GNNTRTVDIV (99 aa). Cys-253 and Cys-313 are oxidised to a cystine. The region spanning 572-739 is the GAIN-B domain; that stretch reads LDKQLSFKCN…AVLMDLTGTE (168 aa). Residues 690–739 are GPS; sequence AAQWDFDLLNGQGGWKSDGCCILYSDENITTIQCGSLGNYAVLMDLTGTE. The cysteines at positions 709 and 723 are disulfide-linked. The chain crosses the membrane as a helical span at residues 748–768; the sequence is LHPVVYTTAITLLLCLLAVII. Topologically, residues 769–785 are cytoplasmic; it reads SYMYHHSLIRISLKSWH. The helical transmembrane segment at 786-806 threads the bilayer; that stretch reads MLVNLCFHILLTCVVFVGGIT. Over 807-815 the chain is Extracellular; that stretch reads QTRNASVCQ. Asn-810 carries an N-linked (GlcNAc...) asparagine glycan. Residues 816 to 836 form a helical membrane-spanning segment; it reads AVGIILHYSTLATVLWVGVTA. The Cytoplasmic segment spans residues 837 to 865; it reads RNIYKQVTKKAKRCQDPDEPPAPPRPMLR. The helical transmembrane segment at 866–886 threads the bilayer; the sequence is FYLIGGGIPIIVCGITAAANI. Topologically, residues 887 to 908 are extracellular; that stretch reads KNYGSRPSAPYCWMAWEPSLGA. Residues 909 to 929 form a helical membrane-spanning segment; the sequence is FYGPASFITFVNCMYFLSIFI. The Cytoplasmic portion of the chain corresponds to 930–985; sequence QLKRHPERKYELKEPTEEQQRLAANENGEINHQDSMSLSLISTSTLENEHSFQSQL. The chain crosses the membrane as a helical span at residues 986-1006; the sequence is LGASLTLLLYVILWMFGAMAV. Residues 1007-1013 are Extracellular-facing; the sequence is SLYYPLD. The chain crosses the membrane as a helical span at residues 1014–1034; the sequence is LVFSFFFGATCLSFSAFMMVH. Residues 1035 to 1310 are Cytoplasmic-facing; the sequence is HCINREDVRL…TGLWKHETTV (276 aa). Disordered regions lie at residues 1065 to 1084, 1187 to 1208, and 1221 to 1264; these read PPNS…SSAE, VEGS…GHSR, and YNPP…ADLE. Polar residues predominate over residues 1222–1239; that stretch reads NPPQQDSSDACSTLPKSS. Residues 1308 to 1310 carry the PDZ-binding motif; sequence TTV.

It belongs to the G-protein coupled receptor 2 family. Adhesion G-protein coupled receptor (ADGR) subfamily. In terms of assembly, interacts (via PDZ-binding motif) with DLG1. In terms of tissue distribution, expressed by spermatogonial progenitor cells located within the outer cell layer of the seminiferous tubule and by multipotent adult spermatogonial-derived stem cells.

The protein resides in the membrane. Its function is as follows. Orphan receptor that may have a role in planar cell polarity pathway. In Mus musculus (Mouse), this protein is Adhesion G protein-coupled receptor A3 (Adgra3).